The primary structure comprises 390 residues: Succinate--CoA ligase [ADP-forming] subunit beta (390 aa).

In terms of domain architecture, ATP-grasp spans 9–248 (KEILRRHKAN…ITEEDPLEVQ (240 aa)). ATP contacts are provided by residues K50, 57-59 (GRG), E103, I106, and E111. Mg(2+) contacts are provided by N203 and D217. Substrate contacts are provided by residues N268 and 325 to 327 (GIV).

This sequence belongs to the succinate/malate CoA ligase beta subunit family. In terms of assembly, heterotetramer of two alpha and two beta subunits. Mg(2+) is required as a cofactor.

The catalysed reaction is succinate + ATP + CoA = succinyl-CoA + ADP + phosphate. The enzyme catalyses GTP + succinate + CoA = succinyl-CoA + GDP + phosphate. It participates in carbohydrate metabolism; tricarboxylic acid cycle; succinate from succinyl-CoA (ligase route): step 1/1. In terms of biological role, succinyl-CoA synthetase functions in the citric acid cycle (TCA), coupling the hydrolysis of succinyl-CoA to the synthesis of either ATP or GTP and thus represents the only step of substrate-level phosphorylation in the TCA. The beta subunit provides nucleotide specificity of the enzyme and binds the substrate succinate, while the binding sites for coenzyme A and phosphate are found in the alpha subunit. The polypeptide is Succinate--CoA ligase [ADP-forming] subunit beta (Leptospira interrogans serogroup Icterohaemorrhagiae serovar copenhageni (strain Fiocruz L1-130)).